The following is a 130-amino-acid chain: MNTMENKIIKSKKAQVSLEFSFLFLAILLASIITISHFLSQNFTKDDKVISDVENAAKTAVILANSGYNGINPNVTLIYGGISWSGNKKNIYIYISPKSYITPEIKNFIVSYIYNVTKINQSEYNITVNP.

Residues 1-14 (MNTMENKIIKSKKA) constitute a propeptide that is removed on maturation. Residues 15 to 23 (QVSLEFSFL) carry the QXSXEXXXL motif.

In terms of processing, the N-terminus is cleaved by the prepilin peptidase EppA, which recognizes the class III signal sequence.

Its subcellular location is the secreted. The protein resides in the cell surface. The protein localises to the fimbrium. This chain is Probable pilin MJ0835.1, found in Methanocaldococcus jannaschii (strain ATCC 43067 / DSM 2661 / JAL-1 / JCM 10045 / NBRC 100440) (Methanococcus jannaschii).